The sequence spans 635 residues: Biosynthetic arginine decarboxylase (635 aa).

Residue lysine 100 is modified to N6-(pyridoxal phosphate)lysine. 282–292 serves as a coordination point for substrate; the sequence is VDIGGGLGVDY.

Belongs to the Orn/Lys/Arg decarboxylase class-II family. SpeA subfamily. It depends on Mg(2+) as a cofactor. Requires pyridoxal 5'-phosphate as cofactor.

The enzyme catalyses L-arginine + H(+) = agmatine + CO2. It functions in the pathway amine and polyamine biosynthesis; agmatine biosynthesis; agmatine from L-arginine: step 1/1. Functionally, catalyzes the biosynthesis of agmatine from arginine. The chain is Biosynthetic arginine decarboxylase from Geobacter sulfurreducens (strain ATCC 51573 / DSM 12127 / PCA).